Consider the following 1034-residue polypeptide: FERM domain-containing protein 4B (1034 aa).

The FERM domain occupies 59–361 (RHCQVHLLDD…SQHQFYLDRK (303 aa)). The residue at position 372 (serine 372) is a Phosphoserine. Coiled coils occupy residues 417–450 (EVSE…ELKK) and 531–561 (KKKR…RCGK). A necessary for adherens junction and tight junction localization region spans residues 542–971 (MKKLQEIENA…TQLTIGLSDY (430 aa)). A compositionally biased stretch (low complexity) spans 576 to 589 (PSESSSLSDTTTYD). Disordered stretches follow at residues 576-614 (PSES…ILPP), 635-698 (DTRQ…LESQ), 712-735 (FSLS…YTSQ), and 752-786 (TTQT…AQKD). Serine 608 is subject to Phosphoserine. Composition is skewed to polar residues over residues 635 to 650 (DTRQ…SSPY) and 663 to 674 (MPTTPVLTRNAY). Positions 675-685 (SSSHLEPESSS) are enriched in low complexity. Serine 697 carries the post-translational modification Phosphoserine. Positions 713–722 (SLSKSQRSSS) are enriched in low complexity. Residues 769 to 781 (QNVSTSNSGSMPN) are compositionally biased toward polar residues. Lysine 882 is covalently cross-linked (Glycyl lysine isopeptide (Lys-Gly) (interchain with G-Cter in SUMO2)). Disordered regions lie at residues 905–925 (RASG…SDRG) and 1004–1034 (DGTD…GTLV). The segment covering 906–920 (ASGQKDQGHSPQTSF) has biased composition (polar residues). A Phosphoserine modification is found at serine 915. Over residues 1018-1034 (SEQRLFWHEDSKPGTLV) the composition is skewed to basic and acidic residues. Lysine 1029 participates in a covalent cross-link: Glycyl lysine isopeptide (Lys-Gly) (interchain with G-Cter in SUMO2).

In terms of assembly, interacts with CYTH3. Interacts with PARD3. Interacts with CYTH1.

The protein resides in the cytoplasm. It localises to the cytoskeleton. It is found in the cell junction. The protein localises to the tight junction. Its subcellular location is the adherens junction. Member of GRP1 signaling complexes that are acutely recruited to plasma membrane ruffles in response to insulin receptor signaling. May function as a scaffolding protein that regulates epithelial cell polarity by connecting ARF6 activation with the PAR3 complex. Plays a redundant role with FRMD4A in epithelial polarization. This is FERM domain-containing protein 4B from Homo sapiens (Human).